Here is a 354-residue protein sequence, read N- to C-terminus: Threonine synthase (354 aa).

Lys-61 bears the N6-(pyridoxal phosphate)lysine mark. Residues Asn-87, 187-191 (GNAGN), and Thr-316 each bind pyridoxal 5'-phosphate.

It belongs to the threonine synthase family. Pyridoxal 5'-phosphate is required as a cofactor.

It carries out the reaction O-phospho-L-homoserine + H2O = L-threonine + phosphate. It functions in the pathway amino-acid biosynthesis; L-threonine biosynthesis; L-threonine from L-aspartate: step 5/5. Its function is as follows. Catalyzes the gamma-elimination of phosphate from L-phosphohomoserine and the beta-addition of water to produce L-threonine. The chain is Threonine synthase (thrC) from Halalkalibacterium halodurans (strain ATCC BAA-125 / DSM 18197 / FERM 7344 / JCM 9153 / C-125) (Bacillus halodurans).